We begin with the raw amino-acid sequence, 217 residues long: EF-hand domain-containing protein D2 homolog (217 aa).

Over residues 1 to 28 (MSVSSNASSASNKDSVDSPSSTTNTDSS) the composition is skewed to low complexity. Positions 1–29 (MSVSSNASSASNKDSVDSPSSTTNTDSSE) are disordered. 2 EF-hand domains span residues 69–104 (NQIK…LGAP) and 105–140 (QTHL…AQAG). 8 residues coordinate Ca(2+): D82, D86, E93, D118, D120, D122, K124, and E129. The segment covering 191-204 (EQEERRREEEERAQ) has biased composition (basic and acidic residues). The disordered stretch occupies residues 191 to 217 (EQEERRREEEERAQRRQQFQQRAAIFQ). Over residues 206-217 (RQQFQQRAAIFQ) the composition is skewed to low complexity.

This Drosophila melanogaster (Fruit fly) protein is EF-hand domain-containing protein D2 homolog (Swip-1).